Reading from the N-terminus, the 201-residue chain is Phosphatidylglycerophosphatase and protein-tyrosine phosphatase 1 (201 aa).

The N-terminal 27 residues, 1-27, are a transit peptide targeting the mitochondrion; it reads MAATALLEAGLARVLFYPTLLYTLFRG. The region spanning 37–188 is the Tyrosine-protein phosphatase domain; it reads WYHRIDPTVL…LKEFHKQITA (152 aa). The active-site Phosphocysteine intermediate is cysteine 132.

Belongs to the protein-tyrosine phosphatase family. Non-receptor class dual specificity subfamily. In terms of assembly, interacts with STYXL1; the interaction inhibits PTPMT1 catalytic activity.

The protein localises to the mitochondrion inner membrane. The catalysed reaction is a 1,2-diacyl-sn-glycero-3-phospho-(1'-sn-glycero-3'-phosphate) + H2O = a 1,2-diacyl-sn-glycero-3-phospho-(1'-sn-glycerol) + phosphate. It carries out the reaction O-phospho-L-tyrosyl-[protein] + H2O = L-tyrosyl-[protein] + phosphate. The enzyme catalyses O-phospho-L-seryl-[protein] + H2O = L-seryl-[protein] + phosphate. It catalyses the reaction O-phospho-L-threonyl-[protein] + H2O = L-threonyl-[protein] + phosphate. The catalysed reaction is 1,2-di-(9Z-octadecenoyl)-sn-glycero-3-phospho-(1'-sn-glycerol-3'-phosphate) + H2O = 1,2-di-(9Z-octadecenoyl)-sn-glycero-3-phospho-(1'-sn-glycerol) + phosphate. It carries out the reaction 1,2-dioctanoyl-sn-glycero-3-phospho-(1D-myo-inositol-5-phosphate) + H2O = 1,2-dioctanoyl-sn-glycero-3-phospho-(1D-myo-inositol) + phosphate. The enzyme catalyses a 1-acyl-2-hexanoyl-sn-glycero-3-phospho-(1D-myo-inositol-5-phosphate) + H2O = a 1-acyl-2-hexanoyl-sn-glycero-3-phospho-(1D-myo-inositol) + phosphate. It catalyses the reaction 1,2-dibutyryl-sn-glycero-3-phospho-(1D-myo-inositol-5-phosphate) + H2O = 1,2-dibutyryl-sn-glycero-3-phospho-(1D-myo-inositol) + phosphate. It functions in the pathway phospholipid metabolism; phosphatidylglycerol biosynthesis; phosphatidylglycerol from CDP-diacylglycerol: step 2/2. Lipid phosphatase which dephosphorylates phosphatidylglycerophosphate (PGP) to phosphatidylglycerol (PG). PGP is an essential intermediate in the biosynthetic pathway of cardiolipin, a mitochondrial-specific phospholipid regulating the membrane integrity and activities of the organelle. Has also been shown to display phosphatase activity toward phosphoprotein substrates, specifically mediates dephosphorylation of mitochondrial proteins, thereby playing an essential role in ATP production. Has probably a preference for proteins phosphorylated on Ser and/or Thr residues compared to proteins phosphorylated on Tyr residues. Probably involved in regulation of insulin secretion in pancreatic beta cells. May prevent intrinsic apoptosis, probably by regulating mitochondrial membrane integrity. The polypeptide is Phosphatidylglycerophosphatase and protein-tyrosine phosphatase 1 (Homo sapiens (Human)).